The primary structure comprises 156 residues: ATP synthase subunit b (156 aa).

A helical membrane pass occupies residues L7–P27.

The protein belongs to the ATPase B chain family. As to quaternary structure, F-type ATPases have 2 components, F(1) - the catalytic core - and F(0) - the membrane proton channel. F(1) has five subunits: alpha(3), beta(3), gamma(1), delta(1), epsilon(1). F(0) has three main subunits: a(1), b(2) and c(10-14). The alpha and beta chains form an alternating ring which encloses part of the gamma chain. F(1) is attached to F(0) by a central stalk formed by the gamma and epsilon chains, while a peripheral stalk is formed by the delta and b chains.

Its subcellular location is the cell inner membrane. In terms of biological role, f(1)F(0) ATP synthase produces ATP from ADP in the presence of a proton or sodium gradient. F-type ATPases consist of two structural domains, F(1) containing the extramembraneous catalytic core and F(0) containing the membrane proton channel, linked together by a central stalk and a peripheral stalk. During catalysis, ATP synthesis in the catalytic domain of F(1) is coupled via a rotary mechanism of the central stalk subunits to proton translocation. Component of the F(0) channel, it forms part of the peripheral stalk, linking F(1) to F(0). The protein is ATP synthase subunit b of Shewanella baltica (strain OS185).